The following is a 460-amino-acid chain: Argininosuccinate lyase (460 aa).

It belongs to the lyase 1 family. Argininosuccinate lyase subfamily.

It localises to the cytoplasm. It carries out the reaction 2-(N(omega)-L-arginino)succinate = fumarate + L-arginine. It participates in amino-acid biosynthesis; L-arginine biosynthesis; L-arginine from L-ornithine and carbamoyl phosphate: step 3/3. This is Argininosuccinate lyase from Limosilactobacillus fermentum (strain NBRC 3956 / LMG 18251) (Lactobacillus fermentum).